The sequence spans 268 residues: Centromere protein Q (268 aa).

Residues 1 to 31 form a disordered region; that stretch reads MSGKANASKKNFEQLKRNPKRKKDNEEVVLS. Phosphoserine is present on S31. The stretch at 170-203 forms a coiled coil; it reads ELMTGNIQSLKNKIQILASEVEEEEERVKQIHQI. S249 carries the post-translational modification Phosphoserine.

It belongs to the CENP-Q/OKP1 family. In terms of assembly, component of the CENPA-CAD complex, composed of CENPI, CENPK, CENPL, CENPO, CENPP, CENPQ, CENPR and CENPS. The CENPA-CAD complex interacts with the CENPA-NAC complex, at least composed of CENPA, CENPC, CENPH, CENPM, CENPN, CENPT and CENPU.

Its subcellular location is the nucleus. The protein localises to the chromosome. It localises to the centromere. In terms of biological role, component of the CENPA-CAD (nucleosome distal) complex, a complex recruited to centromeres which is involved in assembly of kinetochore proteins, mitotic progression and chromosome segregation. May be involved in incorporation of newly synthesized CENPA into centromeres via its interaction with the CENPA-NAC complex. Plays an important role in chromosome congression and in the recruitment of CENP-O complex (which comprises CENPO, CENPP, CENPQ and CENPU), CENPE and PLK1 to the kinetochores. The sequence is that of Centromere protein Q (CENPQ) from Macaca fascicularis (Crab-eating macaque).